Reading from the N-terminus, the 221-residue chain is Histone H1-like protein HC2 (221 aa).

Composition is skewed to basic residues over residues 1 to 50 (MLGV…KTVA) and 59 to 70 (PVAKKATAKKAP). Residues 1–70 (MLGVQKKRST…AKKATAKKAP (70 aa)) form a disordered region.

Belongs to the histone H1/H5 family. HCT subfamily.

In terms of biological role, might have a role in establishing the nucleoid structure of elementary bodies. This is Histone H1-like protein HC2 (hctB) from Chlamydia trachomatis serovar L2 (strain ATCC VR-902B / DSM 19102 / 434/Bu).